Reading from the N-terminus, the 175-residue chain is dATP triphosphohydrolase (175 aa).

DATP is bound at residue Arg19. Residues His34, His66, Asp67, Glu70, Asp75, and Asp119 each contribute to the Co(2+) site.

Belongs to the Caudovirales dATP triphosphohydrolase family. Homohexamer. Co(2+) serves as cofactor. Zn(2+) is required as a cofactor.

The catalysed reaction is dATP + H2O = 2'-deoxyadenosine + triphosphate + H(+). The enzyme catalyses dADP + H2O = 2'-deoxyadenosine + diphosphate. It carries out the reaction dAMP + H2O = 2'-deoxyadenosine + phosphate. Catalyzes the hydrolysis of dATP, dADP and dAMP into dA. This step is essential for Z-genome synthesis (containing aminoadenine instead of adenine). Specifically removes dATP and its precursor dADP from the nucleotide pool of the host, preventing the incorporation of A into the phage genome and favoring the integration of the Z-base into the viral genome. This is dATP triphosphohydrolase (datZ) from Cyanophage S-2L (Cyanobacteria phage S-2L).